A 1187-amino-acid polypeptide reads, in one-letter code: Myelin transcription factor 1-like protein (1187 aa).

The interval 1–20 is disordered; it reads MDVDAEEKRHRTRSKGVRVP. A CCHHC-type 1 zinc finger spans residues 22–65; sequence EPAIQELFSCPTPGCDGSGHVSGKYARHRSVYGCPLAKKRKTQD. Residues cysteine 31, cysteine 36, histidine 49, and cysteine 55 each coordinate Zn(2+). Disordered stretches follow at residues 56–178 and 221–248; these read PLAK…QMSC and RTESEMNSNTSNSLEDDSDKNENLGRKS. Acidic residues predominate over residues 89-172; sequence ECYESDGTED…EEEEEEEENE (84 aa). Serine 251 carries the post-translational modification Phosphoserine. 2 disordered regions span residues 343-422 and 450-509; these read SETN…DRSE and REKM…PTPG. Residues 344 to 358 are compositionally biased toward polar residues; sequence ETNPQDRSQPPNMSV. 3 stretches are compositionally biased toward basic and acidic residues: residues 362-377, 401-412, and 450-504; these read VRQEDDFPGRTPDRSY, AKEDGCHERDDD, and REKM…RESK. CCHHC-type zinc fingers lie at residues 496–539 and 540–583; these read SRTE…PPEI and LAMH…KLAK. Positions 505, 510, 523, 529, 549, 554, 567, and 573 each coordinate Zn(2+). Positions 684-708 are disordered; that stretch reads ASPSSSTTSSYAPSSSSNLSCGGGS. 3 CCHHC-type zinc fingers span residues 895–938, 944–987, and 997–1040; these read LATS…GIRI, DKED…QKDG, and KSVK…MKKA. Positions 904, 909, 922, 928, 953, 958, 971, 977, 1006, 1011, 1024, and 1030 each coordinate Zn(2+). Residues 1055 to 1131 are a coiled coil; it reads SNGIENDEEI…LANLSQSLIH (77 aa).

This sequence belongs to the MYT1 family. Interacts with SIN3B. Brain, testis and pituitary gland. Expression is higher in the brain than in the testis and pituitary gland. Highest level expression seen in the developing CNS.

The protein resides in the nucleus. It is found in the chromosome. In terms of biological role, transcription factor that plays a key role in neuronal differentiation. Acts by specifically repressing expression of non-neuronal genes during neuron differentiation. In contrast to other transcription repressors that inhibit specific lineages, mediates repression of multiple differentiation programs. Also represses expression of negative regulators of neurogenesis, such as members of the Notch signaling pathway, including HES1. The combination of three transcription factors, ASCL1, POU3F2/BRN2 and MYT1L, is sufficient to reprogram fibroblasts and other somatic cells into induced neuronal (iN) cells in vitro. Directly binds the 5'-AAGTT-3' core motif present on the promoter of target genes and represses transcription by recruiting a multiprotein complex containing SIN3B. The 5'-AAGTT-3' core motif is absent from the promoter of neural genes. This chain is Myelin transcription factor 1-like protein (Myt1l), found in Rattus norvegicus (Rat).